The sequence spans 240 residues: MTRGTIQNRDAFLQNIAKRLGRSPRLSGVSQPQWDYAPQWTVFAGYSQDDLLSALREQCKLIHTDYIETTSSELAGALKQQVAAYGGGPVIVPDDPRFAEYGLSALLHDEWPAEQTAVHVWNSSLGRQNIDAAEQANVGIAFSEITLAESGTVVLFSRNEQGRTIHFLPKTYIAIVPKSSVVPRMTQAAAYIHEQIEKGAVVPSCINFITGPSNSADIEMNLVVGVHGPMKAAYIVVTDR.

It belongs to the LutC/YkgG family.

Is involved in L-lactate degradation and allows cells to grow with lactate as the sole carbon source. The protein is Lactate utilization protein C of Geobacillus thermodenitrificans (strain NG80-2).